The sequence spans 616 residues: MDEEETAEINAQEQEVAGSAGEAAAGPSGAEVQPNDDSVAVERVIDVFEETAEMEAAMIERFFGPSGEVAEEGTLPVPGPSADGEGSANAGGERPSEEDIVLDDGTESDGSYNRPGSDMSLDSPNSEDDSDVEAMPRWMIPQNRLRFAVDMMVSQARNQDGGIAALLNRDNFLQRVRSMVFSQERRRSRNSDEVSPEAEDDELPEHPPPPPPRPPIDIDMEEGVHFDTNLPAEHSYFGPNLNRVPGVNYQEVGSTHHMLIFLHQYILFPGEVLPFMIDGSLFDDDMSGLDGLIFAVAFPLMKPPEDSKKLYGVTCQIYEKGDNGRHLTFYKSRALQRIVINCSDIKGLPQYIARNPTNKCHSKVKILPEYFLPEPLKCIDMGSMSRFRDIPSMRDKYLRYQISSTPWPVEVCQEYAYEDIVERARKKLEVHKIDTMPKCPIQMSFWLVRNLHLTEKMMSQMFLTDSVNLRLQLIGGILKEETLFYCRYCNSSLAYCSDLFAMSKHGVQTQYCNPGGYIHETNTVYRVISHAIGYSGEPSTRFSWFPGYQWHIILCKFCAQHVGWEFKAVEPNLAPKMFYGLAGSSVRIGKAGDSATVNGNNFVVRNMLRVISEGME.

3 disordered regions span residues 1–39, 63–137, and 182–220; these read MDEEETAEINAQEQEVAGSAGEAAAGPSGAEVQPNDDSV, FGPS…AMPR, and SQERRRSRNSDEVSPEAEDDELPEHPPPPPPRPPIDIDM. The span at 11-32 shows a compositional bias: low complexity; it reads AQEQEVAGSAGEAAAGPSGAEV. The span at 96 to 107 shows a compositional bias: acidic residues; the sequence is SEEDIVLDDGTE. Basic and acidic residues predominate over residues 183 to 192; it reads QERRRSRNSD. A compositionally biased stretch (acidic residues) spans 194 to 203; it reads VSPEAEDDEL. The span at 206–215 shows a compositional bias: pro residues; sequence HPPPPPPRPP. A Lon N-terminal domain is found at 257–482; that stretch reads HMLIFLHQYI…LIGGILKEET (226 aa). Residues 481-590 form the CULT domain; sequence ETLFYCRYCN…LAGSSVRIGK (110 aa). Zn(2+) is bound by residues Cys-486, Cys-489, Cys-555, and Cys-558.

It belongs to the CRBN family. In terms of assembly, likely a component of a DCX (DDB1-CUL4-X-box) protein ligase complex. May interact with pic/DDB1. Ubiquitinated.

The protein resides in the nucleus. It participates in protein modification; protein ubiquitination. Its function is as follows. Substrate recognition component of a DCX (DDB1-CUL4-X-box) E3 protein ligase complex that mediates the ubiquitination and subsequent proteasomal degradation of target proteins. Has an essential role in mediating growth by negatively regulating insulin signaling. It also has a role in maintaining presynaptic function in the neuromuscular junction synapses of third-instar larvae. In Drosophila pseudoobscura pseudoobscura (Fruit fly), this protein is Protein cereblon.